Reading from the N-terminus, the 193-residue chain is Ion-translocating oxidoreductase complex subunit A (193 aa).

6 consecutive transmembrane segments (helical) span residues 5–25 (LLLFVGTVLVNNFVLVKFLGL), 39–59 (IGMGFATTFVMTIASISSWLM), 62–82 (FILVPLDLLYLRTLSFILVIA), 102–122 (LLGIFLPLITTNCAVLGVALL), 134–154 (AVYGFGAAVGFSLVMVLFAAI), and 171–191 (SIGLITAGLMSLAFMGFSGLV).

The protein belongs to the NqrDE/RnfAE family. The complex is composed of six subunits: RnfA, RnfB, RnfC, RnfD, RnfE and RnfG.

Its subcellular location is the cell inner membrane. Functionally, part of a membrane-bound complex that couples electron transfer with translocation of ions across the membrane. This Proteus mirabilis (strain HI4320) protein is Ion-translocating oxidoreductase complex subunit A.